Reading from the N-terminus, the 190-residue chain is MATHHTLWMGLALLGVLGDLQAAPEAQVSVQPNFQQDKFLGRWFSAGLASNSSWLREKKAALSMCKSVVAPAADGGLNLTSTFLRKNQCETRTMLLQTAGSLGSYSYRSPHWGSTYSVSVVETDYDQYALLYSQGSKGPGEDFRMATLYSRTQTPRAELKEKFTAFCKAQGFTEDTIVFLPQTDKCLTEQ.

The first 22 residues, 1–22 (MATHHTLWMGLALLGVLGDLQA), serve as a signal peptide directing secretion. The N-linked (GlcNAc...) asparagine glycan is linked to Asn51. Cys65 serves as the catalytic Nucleophile. A glycan (N-linked (GlcNAc...) asparagine) is linked at Asn78. Cys89 and Cys186 form a disulfide bridge.

It belongs to the calycin superfamily. Lipocalin family. As to quaternary structure, monomer.

It localises to the rough endoplasmic reticulum. It is found in the nucleus membrane. The protein localises to the golgi apparatus. Its subcellular location is the cytoplasm. The protein resides in the perinuclear region. It localises to the secreted. The catalysed reaction is prostaglandin H2 = prostaglandin D2. Functionally, catalyzes the conversion of PGH2 to PGD2, a prostaglandin involved in smooth muscle contraction/relaxation and a potent inhibitor of platelet aggregation. Involved in a variety of CNS functions, such as sedation, NREM sleep and PGE2-induced allodynia, and may have an anti-apoptotic role in oligodendrocytes. Binds small non-substrate lipophilic molecules, including biliverdin, bilirubin, retinal, retinoic acid and thyroid hormone, and may act as a scavenger for harmful hydrophobic molecules and as a secretory retinoid and thyroid hormone transporter. Possibly involved in development and maintenance of the blood-brain, blood-retina, blood-aqueous humor and blood-testis barrier. It is likely to play important roles in both maturation and maintenance of the central nervous system and male reproductive system. Involved in PLA2G3-dependent maturation of mast cells. PLA2G3 is secreted by immature mast cells and acts on nearby fibroblasts upstream to PTDGS to synthesize PGD2, which in turn promotes mast cell maturation and degranulation via PTGDR. The polypeptide is Prostaglandin-H2 D-isomerase (PTGDS) (Gorilla gorilla gorilla (Western lowland gorilla)).